The sequence spans 561 residues: Potassium-transporting ATPase potassium-binding subunit (561 aa).

Transmembrane regions (helical) follow at residues 4–24 (IIMQ…PLGI), 65–85 (AGSV…VLML), 134–154 (GLTV…FAVI), 177–197 (LYIL…QGVV), 253–273 (FTNL…VVMF), 285–305 (AIMT…TISE), 380–400 (GLYG…LLVG), 417–437 (MVCL…AFAV), 484–504 (MVGA…ALYL), and 528–548 (FIGL…LPAL).

This sequence belongs to the KdpA family. As to quaternary structure, the system is composed of three essential subunits: KdpA, KdpB and KdpC.

The protein localises to the cell membrane. In terms of biological role, part of the high-affinity ATP-driven potassium transport (or Kdp) system, which catalyzes the hydrolysis of ATP coupled with the electrogenic transport of potassium into the cytoplasm. This subunit binds the extracellular potassium ions and delivers the ions to the membrane domain of KdpB through an intramembrane tunnel. The sequence is that of Potassium-transporting ATPase potassium-binding subunit from Listeria welshimeri serovar 6b (strain ATCC 35897 / DSM 20650 / CCUG 15529 / CIP 8149 / NCTC 11857 / SLCC 5334 / V8).